Here is a 398-residue protein sequence, read N- to C-terminus: Phosphoglycerate kinase (398 aa).

Substrate contacts are provided by residues 21–23, R36, 59–62, R119, and R157; these read DFN and HLGR. ATP-binding positions include K208, G296, E327, and 354–357; that span reads GGDS.

This sequence belongs to the phosphoglycerate kinase family. Monomer.

The protein localises to the cytoplasm. It catalyses the reaction (2R)-3-phosphoglycerate + ATP = (2R)-3-phospho-glyceroyl phosphate + ADP. The protein operates within carbohydrate degradation; glycolysis; pyruvate from D-glyceraldehyde 3-phosphate: step 2/5. The protein is Phosphoglycerate kinase of Lactococcus lactis subsp. cremoris (strain MG1363).